The primary structure comprises 161 residues: Thy-1 membrane glycoprotein (161 aa).

Residues 1-19 form the signal peptide; it reads MNLAISIALLLTVLQVSRG. Gln-20 bears the Pyrrolidone carboxylic acid mark. Positions 20–126 constitute an Ig-like V-type domain; it reads QKVTSLTACL…SQNVTVLRDK (107 aa). 2 cysteine pairs are disulfide-bonded: Cys-28-Cys-130 and Cys-38-Cys-104. Residues Asn-42 and Asn-79 are each glycosylated (N-linked (GlcNAc...) asparagine). Residue Ser-82 is modified to Phosphoserine. Residue Asn-119 is glycosylated (N-linked (GlcNAc...) asparagine). The GPI-anchor amidated cysteine; alternate moiety is linked to residue Cys-130. Residues 131–161 constitute a propeptide, removed in mature form; it reads EGISLLAQNTSWLLLLLLSLSLLQATDFMSL. A glycan (N-linked (GlcNAc...) asparagine) is linked at Asn-139.

It localises to the cell membrane. May play a role in cell-cell or cell-ligand interactions during synaptogenesis and other events in the brain. The sequence is that of Thy-1 membrane glycoprotein (THY1) from Homo sapiens (Human).